We begin with the raw amino-acid sequence, 410 residues long: Indoleamine 2,3-dioxygenase nanC (410 aa).

Histidine 309 contacts heme.

Belongs to the indoleamine 2,3-dioxygenase family. Requires heme as cofactor.

It catalyses the reaction D-tryptophan + O2 = N-formyl-D-kynurenine. It carries out the reaction L-tryptophan + O2 = N-formyl-L-kynurenine. The protein operates within secondary metabolite biosynthesis. Indoleamine 2,3-dioxygenase; part of the gene cluster that mediates the biosynthesis of the benzazepine alkaloid nanangelenin A which contains an unprecedented 3,4-dihydro-1-benzazepine-2,5-dione-N-prenyl-N-acetoxy-anthranilamide scaffold. The first step of nanangelenin biosynthesis is catalyzed by the indoleamine 2,3-dioxygenase nanC which produces N-formyl-kynurenine through the catabolism of tryptophan. The two-module NRPS nanA then utilizes anthranilate (Ant) and L-kynurenine (L-Kyn) to assemble the dipeptide product nanangelenin B. The first adenylation domain of nanA (A1) loads anthranilate onto the T1 domain, while A2 loads kynurenine, generated through spontaneous nonenzymatic deformylation of the nanC-supplied N-formyl-kynurenine. The peptide bond formation between the tethered amino acids is catalyzed by the first condensation domain (C1) between anthranilate's carbonyl carbon and kynurenine's aliphatic primary amine. The second C domain (C2) catalyzes the final cyclization event between the aromatic amine of kynurenine and the tethered carbonyl carbon, yielding nanangelenin B. The terminal T3 domain enhances the catalytic efficiency of C2, suggesting the T2-tethered Ant-L-Kyn is transferred to T3 prior to cyclization by C2. Once released from nanA, nanangelenin B is then prenylated by the prenyltransferase nanD to form nanangelenin C. Nanangelenin C is then N-hydroxylated by the FAD-dependent monooxygenase nanF and further acetylated by the acetyltransferase nanB to yield nanangelenin F. Finally, the N-methyltransferase nanE methylates the amide nitrogen of 1-benzazepine to convert nanangelenin F into nanangelenin A. NanE is also able to methylate most of the intermediates of the pathway such as nanangelenin B and nanangelenin C to produce nanangelenin D and nanangelenin E, respectively. The protein is Indoleamine 2,3-dioxygenase nanC of Aspergillus nanangensis.